A 255-amino-acid chain; its full sequence is Pyridoxine 5'-phosphate synthase (255 aa).

Asparagine 12 serves as a coordination point for 3-amino-2-oxopropyl phosphate. A 1-deoxy-D-xylulose 5-phosphate-binding site is contributed by 14-15 (DH). Arginine 23 lines the 3-amino-2-oxopropyl phosphate pocket. Histidine 48 (proton acceptor) is an active-site residue. The 1-deoxy-D-xylulose 5-phosphate site is built by arginine 50 and histidine 55. Glutamate 75 serves as the catalytic Proton acceptor. Position 105 (threonine 105) interacts with 1-deoxy-D-xylulose 5-phosphate. The Proton donor role is filled by histidine 199. Residues glycine 200 and 221–222 (GF) each bind 3-amino-2-oxopropyl phosphate.

It belongs to the PNP synthase family. Homooctamer; tetramer of dimers.

The protein resides in the cytoplasm. It catalyses the reaction 3-amino-2-oxopropyl phosphate + 1-deoxy-D-xylulose 5-phosphate = pyridoxine 5'-phosphate + phosphate + 2 H2O + H(+). The protein operates within cofactor biosynthesis; pyridoxine 5'-phosphate biosynthesis; pyridoxine 5'-phosphate from D-erythrose 4-phosphate: step 5/5. In terms of biological role, catalyzes the complicated ring closure reaction between the two acyclic compounds 1-deoxy-D-xylulose-5-phosphate (DXP) and 3-amino-2-oxopropyl phosphate (1-amino-acetone-3-phosphate or AAP) to form pyridoxine 5'-phosphate (PNP) and inorganic phosphate. The chain is Pyridoxine 5'-phosphate synthase from Rhodopseudomonas palustris (strain BisB18).